The following is a 426-amino-acid chain: Serine--tRNA ligase (426 aa).

Position 233 to 235 (233 to 235 (TAE)) interacts with L-serine. Residue 264–266 (RSE) coordinates ATP. Glu287 is a binding site for L-serine. 351–354 (EISS) contacts ATP. An L-serine-binding site is contributed by Ser387.

This sequence belongs to the class-II aminoacyl-tRNA synthetase family. Type-1 seryl-tRNA synthetase subfamily. In terms of assembly, homodimer. The tRNA molecule binds across the dimer.

The protein localises to the cytoplasm. The catalysed reaction is tRNA(Ser) + L-serine + ATP = L-seryl-tRNA(Ser) + AMP + diphosphate + H(+). It carries out the reaction tRNA(Sec) + L-serine + ATP = L-seryl-tRNA(Sec) + AMP + diphosphate + H(+). Its pathway is aminoacyl-tRNA biosynthesis; selenocysteinyl-tRNA(Sec) biosynthesis; L-seryl-tRNA(Sec) from L-serine and tRNA(Sec): step 1/1. Functionally, catalyzes the attachment of serine to tRNA(Ser). Is also able to aminoacylate tRNA(Sec) with serine, to form the misacylated tRNA L-seryl-tRNA(Sec), which will be further converted into selenocysteinyl-tRNA(Sec). This is Serine--tRNA ligase from Pseudomonas syringae pv. tomato (strain ATCC BAA-871 / DC3000).